Here is a 464-residue protein sequence, read N- to C-terminus: UDP-N-acetylmuramate--L-alanine ligase (464 aa).

118 to 124 contacts ATP; it reads GTHGKTT.

Belongs to the MurCDEF family.

It localises to the cytoplasm. It carries out the reaction UDP-N-acetyl-alpha-D-muramate + L-alanine + ATP = UDP-N-acetyl-alpha-D-muramoyl-L-alanine + ADP + phosphate + H(+). It participates in cell wall biogenesis; peptidoglycan biosynthesis. Functionally, cell wall formation. In Dinoroseobacter shibae (strain DSM 16493 / NCIMB 14021 / DFL 12), this protein is UDP-N-acetylmuramate--L-alanine ligase.